Here is a 555-residue protein sequence, read N- to C-terminus: MSEAEARPTNFIRQIIDEDLASGKHTTVHTRFPPEPNGYLHIGHAKSICLNFGIAQDYQGQCNLRFDDTNPVKEDIEYVDSIKNDVEWLGFHWSGDIRYSSDYFDQLHAYAVELINKGLAYVDELTPEQIREYRGTLTAPGKNSPFRDRSVEENLALFEKMRTGGFEEGKACLRAKIDMASPFIVMRDPVLYRIKFAEHHQTGNKWCIYPMYDFTHCISDALEGITHSLCTLEFQDNRRLYDWVLDNITIPVHPRQYEFSRLNLEYTVMSKRKLNLLVTDKHVEGWDDPRMPTISGLRRRGYTAASIREFCKRIGVTKQDNTIEMASLESCIREDLNENAPRAMAVIDPVKLVIENYPQGESEMVTMPNHPNKPEMGSREVPFSGEIWIDRADFREEANKQYKRLVMGKEVRLRNAYVIKAERVEKDAEGNITTIFCTYDADTLSKDPADGRKVKGVIHWVSAAHALPIEIRLYDRLFSVPNPGAAEDFLSVINPESLVIKQGYGEPSLKAAVAGKAFQFEREGYFCLDSRYATADKLVFNRTVGLRDTWAKAGE.

The 'HIGH' region signature appears at 34–44 (PEPNGYLHIGH). ATP is bound by residues 35 to 37 (EPN) and 41 to 47 (HIGHAKS). Residues aspartate 67 and tyrosine 212 each contribute to the L-glutamine site. ATP is bound by residues threonine 231, 261–262 (RL), and 269–271 (MSK). Residues 268–272 (VMSKR) carry the 'KMSKS' region motif. An interaction with tRNA region spans residues 317-324 (TKQDNTIE).

The protein belongs to the class-I aminoacyl-tRNA synthetase family. Monomer.

It localises to the cytoplasm. It carries out the reaction tRNA(Gln) + L-glutamine + ATP = L-glutaminyl-tRNA(Gln) + AMP + diphosphate. In Salmonella agona (strain SL483), this protein is Glutamine--tRNA ligase.